We begin with the raw amino-acid sequence, 299 residues long: Bifunctional protein FolD 1 (299 aa).

Residues 168–170 (GRS), Ser193, and Ile234 contribute to the NADP(+) site.

Belongs to the tetrahydrofolate dehydrogenase/cyclohydrolase family. Homodimer.

The enzyme catalyses (6R)-5,10-methylene-5,6,7,8-tetrahydrofolate + NADP(+) = (6R)-5,10-methenyltetrahydrofolate + NADPH. It catalyses the reaction (6R)-5,10-methenyltetrahydrofolate + H2O = (6R)-10-formyltetrahydrofolate + H(+). It participates in one-carbon metabolism; tetrahydrofolate interconversion. Functionally, catalyzes the oxidation of 5,10-methylenetetrahydrofolate to 5,10-methenyltetrahydrofolate and then the hydrolysis of 5,10-methenyltetrahydrofolate to 10-formyltetrahydrofolate. In Mesorhizobium japonicum (strain LMG 29417 / CECT 9101 / MAFF 303099) (Mesorhizobium loti (strain MAFF 303099)), this protein is Bifunctional protein FolD 1.